The following is a 616-amino-acid chain: Protein phosphatase EYA4 (616 aa).

M1 is modified (N-acetylmethionine). Disordered stretches follow at residues 1–66 (MEDT…VTTN), 186–211 (SQTQSPLQSGCLSYSPGFSTPQPGQT), and 277–345 (ADGT…DSDL). Glycyl lysine isopeptide (Lys-Gly) (interchain with G-Cter in SUMO2) cross-links involve residues K14 and K52. Residues 56 to 66 (SGLSSTSVTTN) show a composition bias toward low complexity. Residues 277-311 (ADGTSSSTSTYQLQESLQGLTSQPGEFDTVQSPST) are compositionally biased toward polar residues. S338 carries the phosphoserine modification. The active-site Nucleophile is the D352. Mg(2+) contacts are provided by D352, D354, and D580. D354 functions as the Proton donor in the catalytic mechanism.

It belongs to the HAD-like hydrolase superfamily. EYA family. As to quaternary structure, interacts with SIX3; translocates EYA4 from the cytoplasm to the nucleus and promotes activation of their target genes. The cofactor is Mg(2+). As to expression, in the embryo, expressed mainly in the craniofacial mesenchyme, dermamyotome and limb.

It localises to the cytoplasm. The protein localises to the nucleus. The enzyme catalyses O-phospho-L-tyrosyl-[protein] + H2O = L-tyrosyl-[protein] + phosphate. Its function is as follows. Tyrosine phosphatase that specifically dephosphorylates 'Tyr-142' of histone H2AX (H2AXY142ph). 'Tyr-142' phosphorylation of histone H2AX plays a central role in DNA repair and acts as a mark that distinguishes between apoptotic and repair responses to genotoxic stress. Promotes efficient DNA repair by dephosphorylating H2AX, promoting the recruitment of DNA repair complexes containing MDC1. Its function as histone phosphatase probably explains its role in transcription regulation during organogenesis. May be involved in development of the eye. In Mus musculus (Mouse), this protein is Protein phosphatase EYA4 (Eya4).